A 305-amino-acid chain; its full sequence is PI-PLC X domain-containing protein 1 (305 aa).

The N-terminal stretch at Met1 to Ala24 is a signal peptide. Residues Leu25–Ala189 form the PI-PLC X-box domain. Catalysis depends on residues His53 and His97. An N-linked (GlcNAc...) asparagine glycan is attached at Asn237.

It localises to the secreted. In Arthroderma benhamiae (strain ATCC MYA-4681 / CBS 112371) (Trichophyton mentagrophytes), this protein is PI-PLC X domain-containing protein 1.